The chain runs to 793 residues: MASISDSETTNHGSIWDLDQNLDQPMDEEASRLKNMYTEKKFSSILLLRLAFQSLGVVFGDLGTSPLYVFYNIFPHGVDDDEDVIGALSLIIYTLTLIPLMKYVFVVLRANDNGQGGTFALYSLLCRHAKVSTIPNQHKTDEELTTYSRQTYEENSLAAKIKRWLEGHVYKKNCLLILVLIGTCTAIGDGILTPAISVLSASGGIRVQNQKMSTDVVVVVAVIILIGLFSMQHYGTDKVGWLFAPIVLLWFILIGTIGALNIHKYNSSVLKAYNPVYIYRYFRRGKSESWTSLGGIMLSITGTEALYADLCHFPVLAIQIAFTLVVFPCLLLAYTGQAAYIISNKDHVVDAFYRSIPDTIYWPVFIIATLAAIVASQATISATYSIIKQALALGCFPRVSVVHTSKKFLGQIYIPDINWVLMILCIAVTAGFKNQSQIGNAYGTAVVIVMLVTTFLMVPIMLLVWKSHWILVVIFIVLSLMVELPYFTACINKVDQGGWVPLVVATTCFIIMYVWHFCTVKRYEFEMHSKVSMAWILGLGPSLGLVRVPGIGFVYTELASGVPHIFSHFITNLPAIHSVVVFVCVKYLPVYTVPTEERFIVKRIGPKNFHMFRCVARYGYKDIHKRDDDFEKMLLDRLLLFVRLESMMDDYSDSEDFTMMEEKTQGSSNALLLTGKAGSNTMCSTGDLSYSSQDSIVPAKSPIRGNSLTRYSSQTFGDELEFLNLEFLNRCKDAGVVHILGNTVVHARPDSGIIKKVAVNYVFAFLRKICRENSVIFNVPHESLLNVGQIYYI.

The Cytoplasmic portion of the chain corresponds to M1–S54. Residues L55–P75 form a helical membrane-spanning segment. Topologically, residues H76 to A87 are extracellular. The chain crosses the membrane as a helical span at residues L88–L108. The Cytoplasmic segment spans residues R109–L175. A helical membrane pass occupies residues L176–I196. Topologically, residues S197–D215 are extracellular. Residues V216 to T236 traverse the membrane as a helical segment. Residues D237 to K238 lie on the Cytoplasmic side of the membrane. The helical transmembrane segment at V239–A259 threads the bilayer. At L260–S289 the chain is on the extracellular side. N266 carries N-linked (GlcNAc...) asparagine glycosylation. Residues W290–L310 traverse the membrane as a helical segment. At C311–V315 the chain is on the cytoplasmic side. A helical membrane pass occupies residues L316–A338. Over A339–T359 the chain is Extracellular. The helical transmembrane segment at I360–I380 threads the bilayer. At S381–Q411 the chain is on the cytoplasmic side. Residues I412 to F432 traverse the membrane as a helical segment. The Extracellular portion of the chain corresponds to K433–T444. N434 is a glycosylation site (N-linked (GlcNAc...) asparagine). The helical transmembrane segment at A445–W465 threads the bilayer. The Cytoplasmic segment spans residues K466–H468. Residues W469–A489 form a helical membrane-spanning segment. Residues C490–Q496 lie on the Extracellular side of the membrane. The helical transmembrane segment at G497–F517 threads the bilayer. Over C518–I793 the chain is Cytoplasmic.

The protein belongs to the HAK/KUP transporter (TC 2.A.72.3) family.

Its subcellular location is the membrane. High-affinity potassium transporter. The protein is Putative potassium transporter 12 (HAK12) of Oryza sativa subsp. japonica (Rice).